Reading from the N-terminus, the 581-residue chain is Penicillin-binding protein activator LpoA (581 aa).

Residues methionine 1–glycine 26 form the signal peptide. The N-palmitoyl cysteine moiety is linked to residue cysteine 27. Cysteine 27 carries S-diacylglycerol cysteine lipidation.

It belongs to the LpoA family. As to quaternary structure, interacts with PBP1a.

It is found in the cell outer membrane. Functionally, regulator of peptidoglycan synthesis that is essential for the function of penicillin-binding protein 1A (PBP1a). In Histophilus somni (strain 129Pt) (Haemophilus somnus), this protein is Penicillin-binding protein activator LpoA.